The chain runs to 222 residues: Ribosomal RNA small subunit methyltransferase G (222 aa).

S-adenosyl-L-methionine is bound by residues G80, L85, 131–132, and R148; that span reads VE.

The protein belongs to the methyltransferase superfamily. RNA methyltransferase RsmG family.

The protein localises to the cytoplasm. The catalysed reaction is guanosine(527) in 16S rRNA + S-adenosyl-L-methionine = N(7)-methylguanosine(527) in 16S rRNA + S-adenosyl-L-homocysteine. In terms of biological role, specifically methylates the N7 position of guanine in position 527 of 16S rRNA. This chain is Ribosomal RNA small subunit methyltransferase G, found in Polynucleobacter asymbioticus (strain DSM 18221 / CIP 109841 / QLW-P1DMWA-1) (Polynucleobacter necessarius subsp. asymbioticus).